Here is a 433-residue protein sequence, read N- to C-terminus: Glutamate-1-semialdehyde 2,1-aminomutase (433 aa).

Lys266 bears the N6-(pyridoxal phosphate)lysine mark.

Belongs to the class-III pyridoxal-phosphate-dependent aminotransferase family. HemL subfamily. Homodimer. Requires pyridoxal 5'-phosphate as cofactor.

The protein resides in the cytoplasm. It catalyses the reaction (S)-4-amino-5-oxopentanoate = 5-aminolevulinate. It participates in porphyrin-containing compound metabolism; protoporphyrin-IX biosynthesis; 5-aminolevulinate from L-glutamyl-tRNA(Glu): step 2/2. This chain is Glutamate-1-semialdehyde 2,1-aminomutase, found in Psychrobacter cryohalolentis (strain ATCC BAA-1226 / DSM 17306 / VKM B-2378 / K5).